The following is a 299-amino-acid chain: Lysine exporter LysO (299 aa).

Transmembrane regions (helical) follow at residues 1–21 (MFSGLLIILVPLIVGYLIPLR), 31–51 (QLLSWMVYLILFFMGISLAFL), 58–78 (LLAILHYSAVSITVILLCNIA), 109–129 (LKLCGVVVIGFAIGLSGLAFL), 131–151 (HATEASEYTLILLLFLVGIQL), 169–189 (IVAVVVVVSSLIGGLINAFIL), 207–227 (SLSGILLTESFGPVIGSAAFF), and 277–297 (PAAIVHGFILSLLVPILIAFF).

It belongs to the LysO family.

It localises to the cell inner membrane. Mediates export of lysine. This Escherichia coli (strain K12) protein is Lysine exporter LysO.